We begin with the raw amino-acid sequence, 247 residues long: Cementoblastoma-derived protein 1 (247 aa).

Polar residues predominate over residues 1–28 (MGTSSTDSQQAGHRRCSTSNTSAENLTC). Disordered regions lie at residues 1–52 (MGTS…AGQP) and 147–183 (EENS…EKVK).

Post-translationally, phosphorylated. N-glycosylated. As to expression, expressed by cementoblasts, a subpopulation of periodontal ligament cells and cells located around vessels in periodontium (at protein level).

It localises to the cytoplasm. The protein localises to the nucleus. May play a role in development of the periodontium which surrounds and supports the teeth by promoting the differentiation of multi-potent cells from the periodontal ligament into cementoblasts to form the cementum. Binds hydroxyapatite and may promote the biomineralization of the cementum. Also promotes cell proliferation. The sequence is that of Cementoblastoma-derived protein 1 from Homo sapiens (Human).